The chain runs to 596 residues: UDP-glucuronate:xylan alpha-glucuronosyltransferase 2 (596 aa).

Residues 17 to 37 (LIRFNLVLLGFSFLLYTAIFF) form a helical; Signal-anchor for type II membrane protein membrane-spanning segment. Mn(2+) contacts are provided by Asp395 and Asp397. Substrate is bound by residues 395-397 (DAD), 424-426 (NSG), 451-455 (NGGDQ), and 504-509 (HYLGWK). His504 is a binding site for Mn(2+).

This sequence belongs to the glycosyltransferase 8 family. Glycogenin subfamily. It depends on Mn(2+) as a cofactor.

It is found in the golgi apparatus membrane. Glycosyltransferase required for the addition of both glucuronic acid and 4-O-methylglucuronic acid branches to xylan in stem cell walls. In association with GUX1, is responsible for almost all of the substitutions of the xylan backbone in stem glucuronoxylan. The polypeptide is UDP-glucuronate:xylan alpha-glucuronosyltransferase 2 (GUX2) (Arabidopsis thaliana (Mouse-ear cress)).